A 203-amino-acid polypeptide reads, in one-letter code: Probable deoxycytidylate deaminase (203 aa).

The CMP/dCMP-type deaminase domain maps to 27 to 163 (HWDDYFMATS…PTYRASKRML (137 aa)). Position 102 (H102) interacts with Zn(2+). The active-site Proton donor is E104. Zn(2+)-binding residues include C128 and C131.

This sequence belongs to the cytidine and deoxycytidylate deaminase family. Requires Zn(2+) as cofactor.

It catalyses the reaction dCMP + H2O + H(+) = dUMP + NH4(+). In terms of biological role, supplies the nucleotide substrate for thymidylate synthetase. The sequence is that of Probable deoxycytidylate deaminase from Drosophila melanogaster (Fruit fly).